The sequence spans 54 residues: Metallothionein-4 (54 aa).

This sequence belongs to the metallothionein superfamily. Type 11 family.

This is Metallothionein-4 (MTP4) from Yarrowia lipolytica (strain CLIB 122 / E 150) (Yeast).